Here is a 342-residue protein sequence, read N- to C-terminus: Putative ABC transporter anion-binding protein HVO_1888 (342 aa).

Residues 1–32 constitute a signal peptide (tat-type signal); it reads MAIERRRFLQAAGVGAVLGLSGCTGNTSPPQA. Over residues 24-37 the composition is skewed to polar residues; that stretch reads TGNTSPPQANNETA. The disordered stretch occupies residues 24–52; the sequence is TGNTSPPQANNETAEGSGGSESGDGSTQE.

As to quaternary structure, the complex is composed of two ATP-binding proteins (HVO_1886), two transmembrane proteins (HVO_1887) and a solute-binding protein (HVO_1888). Predicted to be exported by the Tat system. The position of the signal peptide cleavage has not been experimentally proven.

In terms of biological role, part of an ABC transporter complex involved in anions import. The sequence is that of Putative ABC transporter anion-binding protein HVO_1888 from Haloferax volcanii (strain ATCC 29605 / DSM 3757 / JCM 8879 / NBRC 14742 / NCIMB 2012 / VKM B-1768 / DS2) (Halobacterium volcanii).